Here is a 379-residue protein sequence, read N- to C-terminus: Lipid-A-disaccharide synthase (379 aa).

It belongs to the LpxB family.

It carries out the reaction a lipid X + a UDP-2-N,3-O-bis[(3R)-3-hydroxyacyl]-alpha-D-glucosamine = a lipid A disaccharide + UDP + H(+). It participates in bacterial outer membrane biogenesis; LPS lipid A biosynthesis. Functionally, condensation of UDP-2,3-diacylglucosamine and 2,3-diacylglucosamine-1-phosphate to form lipid A disaccharide, a precursor of lipid A, a phosphorylated glycolipid that anchors the lipopolysaccharide to the outer membrane of the cell. This Vibrio cholerae serotype O1 (strain ATCC 39541 / Classical Ogawa 395 / O395) protein is Lipid-A-disaccharide synthase.